The primary structure comprises 336 residues: NADH-quinone oxidoreductase subunit H (336 aa).

8 consecutive transmembrane segments (helical) span residues 4–24 (YILW…LVVA), 75–95 (YLFF…WAVI), 108–128 (LGLL…VIAG), 154–174 (MGFA…TGII), 181–201 (IWHW…IAGI), 233–253 (LFFL…SIMF), 272–292 (FVPG…MFLW), and 308–328 (LGWK…ACMV).

This sequence belongs to the complex I subunit 1 family. In terms of assembly, NDH-1 is composed of 14 different subunits. Subunits NuoA, H, J, K, L, M, N constitute the membrane sector of the complex.

Its subcellular location is the cell inner membrane. It carries out the reaction a quinone + NADH + 5 H(+)(in) = a quinol + NAD(+) + 4 H(+)(out). Functionally, NDH-1 shuttles electrons from NADH, via FMN and iron-sulfur (Fe-S) centers, to quinones in the respiratory chain. The immediate electron acceptor for the enzyme in this species is believed to be ubiquinone. Couples the redox reaction to proton translocation (for every two electrons transferred, four hydrogen ions are translocated across the cytoplasmic membrane), and thus conserves the redox energy in a proton gradient. This subunit may bind ubiquinone. This is NADH-quinone oxidoreductase subunit H from Francisella tularensis subsp. tularensis (strain FSC 198).